The chain runs to 87 residues: U14-lycotoxin-Ls1b (87 aa).

Positions 1-20 (MNSKVFVVLLLLALSTCVLS) are cleaved as a signal peptide. In terms of domain architecture, WAP spans 21–66 (EKYCPTPRNTSCKKMNIRNNCCRDSDCTSNAFCCAEPCGNFCHKAS). Intrachain disulfides connect Cys24–Cys54, Cys32–Cys58, Cys41–Cys53, Cys42–Cys80, and Cys47–Cys62.

It belongs to the venom protein 11 family. 01 (wap-1) subfamily. In terms of processing, contains 5 disulfide bonds. Expressed by the venom gland.

It localises to the secreted. Functionally, has antibacterial activity. This Lycosa singoriensis (Wolf spider) protein is U14-lycotoxin-Ls1b.